The primary structure comprises 284 residues: ATP synthase gamma chain (284 aa).

It belongs to the ATPase gamma chain family. F-type ATPases have 2 components, CF(1) - the catalytic core - and CF(0) - the membrane proton channel. CF(1) has five subunits: alpha(3), beta(3), gamma(1), delta(1), epsilon(1). CF(0) has three main subunits: a, b and c.

The protein resides in the cell membrane. Produces ATP from ADP in the presence of a proton gradient across the membrane. The gamma chain is believed to be important in regulating ATPase activity and the flow of protons through the CF(0) complex. The protein is ATP synthase gamma chain of Bacillus licheniformis (strain ATCC 14580 / DSM 13 / JCM 2505 / CCUG 7422 / NBRC 12200 / NCIMB 9375 / NCTC 10341 / NRRL NRS-1264 / Gibson 46).